A 471-amino-acid chain; its full sequence is UDP-N-acetylmuramoylalanine--D-glutamate ligase (471 aa).

127-133 contacts ATP; sequence GSNGKST.

It belongs to the MurCDEF family.

It localises to the cytoplasm. It catalyses the reaction UDP-N-acetyl-alpha-D-muramoyl-L-alanine + D-glutamate + ATP = UDP-N-acetyl-alpha-D-muramoyl-L-alanyl-D-glutamate + ADP + phosphate + H(+). It participates in cell wall biogenesis; peptidoglycan biosynthesis. Its function is as follows. Cell wall formation. Catalyzes the addition of glutamate to the nucleotide precursor UDP-N-acetylmuramoyl-L-alanine (UMA). The protein is UDP-N-acetylmuramoylalanine--D-glutamate ligase of Colwellia psychrerythraea (strain 34H / ATCC BAA-681) (Vibrio psychroerythus).